The primary structure comprises 293 residues: Bifunctional protein FolD (293 aa).

NADP(+) contacts are provided by residues 165 to 167 (GRS), S190, and I231.

This sequence belongs to the tetrahydrofolate dehydrogenase/cyclohydrolase family. In terms of assembly, homodimer.

The catalysed reaction is (6R)-5,10-methylene-5,6,7,8-tetrahydrofolate + NADP(+) = (6R)-5,10-methenyltetrahydrofolate + NADPH. It catalyses the reaction (6R)-5,10-methenyltetrahydrofolate + H2O = (6R)-10-formyltetrahydrofolate + H(+). It functions in the pathway one-carbon metabolism; tetrahydrofolate interconversion. Catalyzes the oxidation of 5,10-methylenetetrahydrofolate to 5,10-methenyltetrahydrofolate and then the hydrolysis of 5,10-methenyltetrahydrofolate to 10-formyltetrahydrofolate. The sequence is that of Bifunctional protein FolD from Synechococcus sp. (strain WH7803).